A 242-amino-acid chain; its full sequence is Small ribosomal subunit protein uS2 (242 aa).

Belongs to the universal ribosomal protein uS2 family.

This is Small ribosomal subunit protein uS2 from Shewanella halifaxensis (strain HAW-EB4).